A 163-amino-acid chain; its full sequence is Large ribosomal subunit protein uL10 (163 aa).

The protein belongs to the universal ribosomal protein uL10 family. As to quaternary structure, part of the ribosomal stalk of the 50S ribosomal subunit. The N-terminus interacts with L11 and the large rRNA to form the base of the stalk. The C-terminus forms an elongated spine to which L12 dimers bind in a sequential fashion forming a multimeric L10(L12)X complex.

In terms of biological role, forms part of the ribosomal stalk, playing a central role in the interaction of the ribosome with GTP-bound translation factors. This chain is Large ribosomal subunit protein uL10, found in Haemophilus influenzae (strain 86-028NP).